A 273-amino-acid chain; its full sequence is MAVVKCKPTSPGRRHVIKVVNNELYKGKPYSLLLRKKSKSGGRNNNGRITTRHIGGGHKRAYRIVDFKRNKDDIGATVERFEYDPNRSSNIALILYKDGERKYILAPKGIKIGDTIISGLRAPIKTGNTLPLKNIPVGTFVHNVELKPGKGGQIARSAGSYVQLVAFDEEYATLRLRSGEMRKTQSNCRATIGEVGNSEHMLKVLGKAGASRWIGIRPTVRGTAMNPVDHPHGGGEGRNFGKHPVTPWGIQTKGKKTRKNKRTDKFILRHRRK.

A disordered region spans residues 224–264 (AMNPVDHPHGGGEGRNFGKHPVTPWGIQTKGKKTRKNKRTD). Positions 253 to 264 (KGKKTRKNKRTD) are enriched in basic residues.

It belongs to the universal ribosomal protein uL2 family. In terms of assembly, part of the 50S ribosomal subunit. Forms a bridge to the 30S subunit in the 70S ribosome.

One of the primary rRNA binding proteins. Required for association of the 30S and 50S subunits to form the 70S ribosome, for tRNA binding and peptide bond formation. It has been suggested to have peptidyltransferase activity; this is somewhat controversial. Makes several contacts with the 16S rRNA in the 70S ribosome. The chain is Large ribosomal subunit protein uL2 from Buchnera aphidicola subsp. Acyrthosiphon pisum (strain 5A).